A 668-amino-acid chain; its full sequence is DNA ligase (668 aa).

NAD(+) contacts are provided by residues 34-38 (DAEYD), 83-84 (SL), and glutamate 113. Residue lysine 115 is the N6-AMP-lysine intermediate of the active site. 4 residues coordinate NAD(+): arginine 136, glutamate 170, lysine 286, and lysine 310. Cysteine 404, cysteine 407, cysteine 422, and cysteine 427 together coordinate Zn(2+). The 79-residue stretch at 590 to 668 (DSDSYFAGKT…EEQLMGELKK (79 aa)) folds into the BRCT domain.

Belongs to the NAD-dependent DNA ligase family. LigA subfamily. Mg(2+) serves as cofactor. Requires Mn(2+) as cofactor.

It carries out the reaction NAD(+) + (deoxyribonucleotide)n-3'-hydroxyl + 5'-phospho-(deoxyribonucleotide)m = (deoxyribonucleotide)n+m + AMP + beta-nicotinamide D-nucleotide.. In terms of biological role, DNA ligase that catalyzes the formation of phosphodiester linkages between 5'-phosphoryl and 3'-hydroxyl groups in double-stranded DNA using NAD as a coenzyme and as the energy source for the reaction. It is essential for DNA replication and repair of damaged DNA. This chain is DNA ligase, found in Bacillus subtilis (strain 168).